The following is a 372-amino-acid chain: Ribosomal RNA small subunit methyltransferase H (372 aa).

Residues 44-46, Asp-63, Leu-97, Asp-111, and Gln-118 each bind S-adenosyl-L-methionine; that span reads GGH. Basic and acidic residues predominate over residues 315–334; that stretch reads RAAERLDPTAEQRRRTDRER. Positions 315–372 are disordered; it reads RAAERLDPTAEQRRRTDRERYRRRVRAMHQPGTGSAVRRPTPGDDGTGTDEEGEGHDS. Residues 361-372 are compositionally biased toward acidic residues; it reads TGTDEEGEGHDS.

It belongs to the methyltransferase superfamily. RsmH family.

Its subcellular location is the cytoplasm. It carries out the reaction cytidine(1402) in 16S rRNA + S-adenosyl-L-methionine = N(4)-methylcytidine(1402) in 16S rRNA + S-adenosyl-L-homocysteine + H(+). Its function is as follows. Specifically methylates the N4 position of cytidine in position 1402 (C1402) of 16S rRNA. The protein is Ribosomal RNA small subunit methyltransferase H of Salinispora arenicola (strain CNS-205).